The sequence spans 346 residues: GPALPP motifs-containing protein 1 (346 aa).

2 disordered regions span residues 1-283 and 289-308; these read MARD…ESLM and KLKS…IPFD. A2 carries the N-acetylalanine modification. A GPALPP motif 1 motif is present at residues 7–12; the sequence is GPALPP. S28 carries the post-translational modification Phosphoserine. The short motif at 32-37 is the GPALPP motif 2 element; sequence GPALPP. Over residues 60–69 the composition is skewed to acidic residues; sequence GNQESEEEDT. The GPALPP motif 3 signature appears at 91–96; that stretch reads GPALPP. A Phosphoserine modification is found at S104. The segment covering 106 to 115 has biased composition (pro residues); that stretch reads PRPIIGPALP. The GPALPP motif 4 signature appears at 111–116; it reads GPALPP. Residues 123-132 are compositionally biased toward basic and acidic residues; that stretch reads QKNDKGREDP. Phosphoserine occurs at positions 136, 141, and 146. The segment covering 142-152 has biased composition (acidic residues); sequence EEAESGEDEDI. Basic and acidic residues-rich tracts occupy residues 169-193 and 233-267; these read EFEK…KPIT and PADR…KRLA. K277 is covalently cross-linked (Glycyl lysine isopeptide (Lys-Gly) (interchain with G-Cter in SUMO2)). Over residues 293-308 the composition is skewed to basic and acidic residues; the sequence is KAAEDKNKHQERIPFD. A Glycyl lysine isopeptide (Lys-Gly) (interchain with G-Cter in SUMO2) cross-link involves residue K314.

This chain is GPALPP motifs-containing protein 1 (Gpalpp1), found in Mus musculus (Mouse).